A 379-amino-acid chain; its full sequence is Glucose-insensitive transcription protein 7 (379 aa).

In terms of domain architecture, CS spans 181–272; the sequence is SNRIRYDWSQ…VSEIKWEALV (92 aa). The SGS domain maps to 292–379; the sequence is ASGNTKNKAK…PPQGMEPKKF (88 aa). The interval 345 to 379 is disordered; it reads SYTESNGTALSTNWKDVKSKTFETKPPQGMEPKKF. Positions 346-358 are enriched in polar residues; that stretch reads YTESNGTALSTNW.

Its function is as follows. Involved in cyclic AMP (cAMP) pathway, possibly by participating in the assembly or the conformational activation of specific multiprotein complexes. The protein is Glucose-insensitive transcription protein 7 (git7) of Schizosaccharomyces pombe (strain 972 / ATCC 24843) (Fission yeast).